We begin with the raw amino-acid sequence, 1087 residues long: Platelet-derived growth factor receptor alpha (1087 aa).

An N-terminal signal peptide occupies residues 1–24 (MMPAMRASLILGCLLIIGPWAILA). The Extracellular portion of the chain corresponds to 25–530 (ENPLPTIFPD…PTLRSELTVA (506 aa)). 2 consecutive Ig-like C2-type domains span residues 27 to 114 (PLPT…SEIE) and 118 to 211 (IYIY…LQTW). Cys-50 and Cys-101 are oxidised to a cystine. Residues Asn-77 and Asn-104 are each glycosylated (N-linked (GlcNAc...) asparagine). A disulfide bridge connects residues Cys-151 and Cys-192. 7 N-linked (GlcNAc...) asparagine glycosylation sites follow: Asn-216, Asn-282, Asn-309, Asn-356, Asn-362, Asn-461, and Asn-471. Ig-like C2-type domains are found at residues 217–309 (ISVE…KKTN), 315–409 (KGFI…KSYS), and 417–519 (PALI…LKLV). Residues Cys-238 and Cys-293 are joined by a disulfide bond. Cys-438 and Cys-503 are oxidised to a cystine. Residues 531-551 (AAVLVLLVIVIISLIVLVIIW) traverse the membrane as a helical segment. Residues 552 to 1087 (KQKPRYEIRW…SSDLVEDSFL (536 aa)) are Cytoplasmic-facing. Phosphotyrosine; by autocatalysis occurs at positions 574 and 576. In terms of domain architecture, Protein kinase spans 595–970 (LVLGRILGSG…CYETVLHDFL (376 aa)). ATP contacts are provided by residues 601–609 (LGSGAFGKV) and Lys-629. Phosphotyrosine; by autocatalysis is present on residues Tyr-722, Tyr-733, Tyr-744, Tyr-756, and Tyr-764. Asp-818 acts as the Proton acceptor in catalysis. 3 positions are modified to phosphotyrosine; by autocatalysis: Tyr-849, Tyr-988, and Tyr-1017. A disordered region spans residues 1017–1064 (YIIPLPDIDPVSEDESGKRNRHSSQTSEESAIETGSSSSTFIKRDDET). Residues 1039–1057 (SSQTSEESAIETGSSSSTF) are compositionally biased toward polar residues.

It belongs to the protein kinase superfamily. Tyr protein kinase family. CSF-1/PDGF receptor subfamily. In terms of assembly, interacts with homodimeric pdgfa, pdgfb and pdgfc, and with heterodimers formed by pdgfa and pdgfb. Monomer in the absence of bound ligand. Interaction with dimeric pdgfa, pdgfb and/or pdgfc leads to receptor dimerization, where both pdgfra homodimers and heterodimers with pdgfrb are observed. Ubiquitinated, leading to its internalization and degradation. In terms of processing, autophosphorylated on tyrosine residues upon ligand binding. Autophosphorylation occurs in trans, i.e. one subunit of the dimeric receptor phosphorylates tyrosine residues on the other subunit.

Its subcellular location is the cell membrane. It localises to the cell projection. It is found in the cilium. The protein resides in the golgi apparatus. The enzyme catalyses L-tyrosyl-[protein] + ATP = O-phospho-L-tyrosyl-[protein] + ADP + H(+). With respect to regulation, present in an inactive conformation in the absence of bound ligand. Binding of pdgfa and/or pdgfb leads to dimerization and activation by autophosphorylation on tyrosine residues. Functionally, tyrosine-protein kinase that acts as a cell-surface receptor for pdgfa, pdgfb and pdgfc and plays an essential role in the regulation of embryonic development, cell proliferation, survival and chemotaxis. Depending on the context, promotes or inhibits cell proliferation and cell migration. Plays an important role in the differentiation of bone marrow-derived mesenchymal stem cells. Required for normal skeleton development. Required for normal development of the gastrointestinal tract. Plays a role in cell migration and chemotaxis in wound healing. Plays a role in platelet activation, secretion of agonists from platelet granules, and in thrombin-induced platelet aggregation. Binding of its cognate ligands - homodimeric pdgfa, homodimeric pdgfb, heterodimers formed by pdgfa and pdgfb or homodimeric pdgfc -leads to the activation of several signaling cascades; the response depends on the nature of the bound ligand and is modulated by the formation of heterodimers between pdgfra and pdgfrb. Phosphorylates pik3r1, plcg1, and ptpn11. Activation of plcg1 leads to the production of the cellular signaling molecules diacylglycerol and inositol 1,4,5-trisphosphate, mobilization of cytosolic Ca(2+) and the activation of protein kinase C. Phosphorylates pik3r1, the regulatory subunit of phosphatidylinositol 3-kinase, and thereby mediates activation of the akt1 signaling pathway. Mediates activation of hras and of the MAP kinases mapk1/erk2 and/or mapk3/erk1. Promotes activation of stat family members stat1, stat3 and stat5a and/or stat5b. Receptor signaling is down-regulated by protein phosphatases that dephosphorylate the receptor and its down-stream effectors, and by rapid internalization of the activated receptor. The chain is Platelet-derived growth factor receptor alpha (pdgfra) from Xenopus laevis (African clawed frog).